Reading from the N-terminus, the 149-residue chain is MKVVLIQDVPKLGKKGEVINASDGYARNFLIPRGLAREATPEVLKQLEKEKEEEKKRLEALKRESENLLSELHKHVFKIKAKAGDGGKLFGSLTSANISDVISKTLSKEFDKKWIVLDNPIKALGTYDVTVKLPGGVSGKIKVEVLREE.

This sequence belongs to the bacterial ribosomal protein bL9 family.

Binds to the 23S rRNA. This chain is Large ribosomal subunit protein bL9, found in Fervidobacterium nodosum (strain ATCC 35602 / DSM 5306 / Rt17-B1).